The primary structure comprises 131 residues: Small ribosomal subunit protein uS11 (131 aa).

Belongs to the universal ribosomal protein uS11 family. Part of the 30S ribosomal subunit. Interacts with proteins S7 and S18. Binds to IF-3.

Functionally, located on the platform of the 30S subunit, it bridges several disparate RNA helices of the 16S rRNA. Forms part of the Shine-Dalgarno cleft in the 70S ribosome. The chain is Small ribosomal subunit protein uS11 from Chromobacterium violaceum (strain ATCC 12472 / DSM 30191 / JCM 1249 / CCUG 213 / NBRC 12614 / NCIMB 9131 / NCTC 9757 / MK).